A 584-amino-acid chain; its full sequence is MVAEVCSMPTASTVKKPFDLRSKMGKWCHHRFPCCRGSGKSNMGTSGDHDDSFMKMLRSKMGKCCRHCFPCCRGSGTSNVGTSGDHENSFMKMLRSKMGKWCCHCFPCCRGSGKSNVGAWGDYDHSAFMEPRYHIRREDLDKLHRAAWWGKVPRKDLIVMLRDTDMNKRDKEKRTALHLASANGNSEVVQLLLDRRCQLNVLDNKKRTALIKAIQCQEDECVLMLLEHGADRNIPDEYGNTALHYAIYNEDKLMAKALLLYGADIESKNKCGLTPLLLGVHEQKQQVVKFLIKKKANLNVLDRYGRTALILAVCCGSASIVNLLLEQNVDVSSQDLSGQTAREYAVSSHHHVICELLSDYKEKQMLKISSENSNPEQDLKLTSEEESQRLKVSENSQPEKMSQEPEINKDCDREVEEEIKKHGSNPVGLPENLTNGASAGNGDDGLIPQRRSRKPENQQFPDTENEEYHSDEQNDTRKQLSEEQNTGISQDEILTNKQKQIEVAEQKMNSELSLSHKKEEDLLRENSVLQEEIAMLRLELDETKHQNQLRENKILEEIESVKEKTDKLLRAMQLNEEALTKTNI.

6 ANK repeats span residues 172 to 201, 205 to 234, 238 to 267, 271 to 300, 304 to 333, and 337 to 366; these read EKRTALHLASANGNSEVVQLLLDRRCQLNV, KKRTALIKAIQCQEDECVLMLLEHGADRNI, YGNTALHYAIYNEDKLMAKALLLYGADIES, CGLTPLLLGVHEQKQQVVKFLIKKKANLNV, YGRTALILAVCCGSASIVNLLLEQNVDVSS, and SGQTAREYAVSSHHHVICELLSDYKEKQML. Residues 369 to 502 are disordered; the sequence is SSENSNPEQD…ILTNKQKQIE (134 aa). 3 stretches are compositionally biased toward basic and acidic residues: residues 377-392, 401-412, and 466-481; these read QDLKLTSEEESQRLKV, MSQEPEINKDCD, and EEYHSDEQNDTRKQLS. Polar residues predominate over residues 482–498; it reads EEQNTGISQDEILTNKQ. A coiled-coil region spans residues 494–583; sequence LTNKQKQIEV…LNEEALTKTN (90 aa).

The protein belongs to the POTE family. As to expression, expressed in prostate, ovary, testis, placenta and prostate cancer cell lines. Localizes to basal and terminal prostate epithelial cells.

The protein resides in the cell membrane. This Homo sapiens (Human) protein is POTE ankyrin domain family member D (POTED).